The following is a 283-amino-acid chain: NAD kinase (283 aa).

Catalysis depends on Asp66, which acts as the Proton acceptor. NAD(+)-binding positions include 66–67, 140–141, Arg151, Arg168, Asp170, and Gln240; these read DG and ND.

This sequence belongs to the NAD kinase family. It depends on a divalent metal cation as a cofactor.

It is found in the cytoplasm. It catalyses the reaction NAD(+) + ATP = ADP + NADP(+) + H(+). Functionally, involved in the regulation of the intracellular balance of NAD and NADP, and is a key enzyme in the biosynthesis of NADP. Catalyzes specifically the phosphorylation on 2'-hydroxyl of the adenosine moiety of NAD to yield NADP. This chain is NAD kinase, found in Syntrophobacter fumaroxidans (strain DSM 10017 / MPOB).